The sequence spans 480 residues: Proline--tRNA ligase (480 aa).

Belongs to the class-II aminoacyl-tRNA synthetase family. ProS type 3 subfamily. Homodimer.

The protein localises to the cytoplasm. It catalyses the reaction tRNA(Pro) + L-proline + ATP = L-prolyl-tRNA(Pro) + AMP + diphosphate. Its function is as follows. Catalyzes the attachment of proline to tRNA(Pro) in a two-step reaction: proline is first activated by ATP to form Pro-AMP and then transferred to the acceptor end of tRNA(Pro). This Roseiflexus castenholzii (strain DSM 13941 / HLO8) protein is Proline--tRNA ligase.